The sequence spans 708 residues: ARF GTPase-activating protein GIT2 (708 aa).

The Arf-GAP domain maps to 1 to 124 (MSKRLRSSDV…AFVHRLPCRE (124 aa)). A C4-type zinc finger spans residues 11-34 (CADCNGPDPSWASVNRGTFICDEC). ANK repeat units lie at residues 132–161 (DLSKQLHSSVRTGNLETCLRLLSLGAQANF), 166–195 (KGSTPLHVASKAGQILQAELLAVYGADPGT), and 199–228 (SGKTPVDYARQGGHHELAERLIEIQYELTD). The segment at 376–592 (STQHSTESQD…SPTLPSTEDV (217 aa)) is disordered. The span at 384 to 401 (QDNDQPDYDSVASDEDTD) shows a compositional bias: acidic residues. Residues Ser-393 and Ser-396 each carry the phosphoserine modification. Thr-400 is subject to Phosphothreonine. Positions 407-438 (SKANRQKLQTLQSENSSLRRQATASACQVQTG) are enriched in polar residues. Residues 504-518 (TSSSSLPSFPSTLSW) show a composition bias toward low complexity. Residues Ser-508, Ser-511, and Ser-519 each carry the phosphoserine modification. The segment covering 519–532 (SRDESARRASRLEK) has biased composition (basic and acidic residues). Thr-536 bears the Phosphothreonine mark. At Ser-563 the chain carries Phosphoserine.

In terms of assembly, may form heterooligomers with GIT1. Directly interacts with protein Piccolo/PCLO. Interacts with PPFIA1 and PPFIA2. Interacts with ARHGEF7. Identified in a complex with ARHGEF6 and BIN2. Interacts with PAK3. Interacts with PXN/paxillin. Interacts with TGFB1I1. Forms a complex with EFNB1 and GRB4/NCK2. Tyrosine phosphorylated when coexpressed in cells with PTK2/FAK1 and SRC. As to expression, expressed in the brain (at protein level).

GTPase-activating protein for ADP ribosylation factor family members, including ARF1. This chain is ARF GTPase-activating protein GIT2 (Git2), found in Mus musculus (Mouse).